The following is a 381-amino-acid chain: ELMO domain-containing protein 3 (381 aa).

Residues 1–31 (MNEKSCSFHSKEELRDGQGERLSAGYSPSYD) form a disordered region. Basic and acidic residues predominate over residues 9 to 19 (HSKEELRDGQG). The ELMO domain maps to 170-324 (VHGRVLQTIY…ELEVLAKKSP (155 aa)).

In terms of tissue distribution, both isoform 1 and isoform 6 are widely expressed.

The protein localises to the cell projection. It is found in the stereocilium. It localises to the kinocilium. Its subcellular location is the cytoplasm. The protein resides in the cytoskeleton. Its function is as follows. Acts as a GTPase-activating protein (GAP) for ARL2 with low specific activity. This chain is ELMO domain-containing protein 3 (ELMOD3), found in Homo sapiens (Human).